The sequence spans 332 residues: Glyceraldehyde-3-phosphate dehydrogenase (332 aa).

NAD(+)-binding positions include 10–11 (RI), aspartate 36, lysine 81, and serine 116. D-glyceraldehyde 3-phosphate contacts are provided by residues 150–152 (SCT), threonine 181, arginine 197, 210–211 (TK), and arginine 233. Cysteine 151 functions as the Nucleophile in the catalytic mechanism. Asparagine 314 contributes to the NAD(+) binding site.

It belongs to the glyceraldehyde-3-phosphate dehydrogenase family. As to quaternary structure, homotetramer.

It localises to the cytoplasm. It catalyses the reaction D-glyceraldehyde 3-phosphate + phosphate + NAD(+) = (2R)-3-phospho-glyceroyl phosphate + NADH + H(+). Its pathway is carbohydrate degradation; glycolysis; pyruvate from D-glyceraldehyde 3-phosphate: step 1/5. Its function is as follows. Catalyzes the oxidative phosphorylation of glyceraldehyde 3-phosphate (G3P) to 1,3-bisphosphoglycerate (BPG) using the cofactor NAD. The first reaction step involves the formation of a hemiacetal intermediate between G3P and a cysteine residue, and this hemiacetal intermediate is then oxidized to a thioester, with concomitant reduction of NAD to NADH. The reduced NADH is then exchanged with the second NAD, and the thioester is attacked by a nucleophilic inorganic phosphate to produce BPG. The sequence is that of Glyceraldehyde-3-phosphate dehydrogenase (gapA) from Helicobacter pylori (strain J99 / ATCC 700824) (Campylobacter pylori J99).